The following is a 456-amino-acid chain: Tyrosinase-like protein (456 aa).

The N-terminal stretch at 1–22 is a signal peptide; sequence MNTMTLLGKVFLLQFLIGVGFC. Cu cation is bound by residues His-145, His-154, His-163, His-295, His-299, and His-322.

Belongs to the tyrosinase family. The cofactor is Cu(2+). As to expression, prismatic layer of shell (at protein level).

It is found in the secreted. The protein is Tyrosinase-like protein of Pinctada maxima (Silver-lipped pearl oyster).